We begin with the raw amino-acid sequence, 410 residues long: BTB/POZ and MATH domain-containing protein 5 (410 aa).

The disordered stretch occupies residues 1 to 24; the sequence is MSESVIQGSNPDRVLSPTSSKSVT. The 135-residue stretch at 28–162 folds into the MATH domain; it reads NGSHQFVIQG…DDCLIINCTV (135 aa). The 67-residue stretch at 198-264 folds into the BTB domain; that stretch reads SDITFNIAGE…MYKDSLPEDV (67 aa).

The protein belongs to the Tdpoz family. As to quaternary structure, heterodimer with BPM1 and BPM3. Interacts with RAP2-4. Binds to MYB56 at the promoter of FLOWERING LOCUS T (FT). As to expression, ubiquitous.

The protein resides in the nucleus. Its subcellular location is the cytoplasm. It functions in the pathway protein modification; protein ubiquitination. In terms of biological role, may act as a substrate-specific adapter of an E3 ubiquitin-protein ligase complex (CUL3-RBX1-BTB) which mediates the ubiquitination and subsequent proteasomal degradation of target proteins. The chain is BTB/POZ and MATH domain-containing protein 5 (BPM5) from Arabidopsis thaliana (Mouse-ear cress).